Reading from the N-terminus, the 120-residue chain is Protein EPIDERMAL PATTERNING FACTOR 2 (120 aa).

The first 25 residues, 1–25, serve as a signal peptide directing secretion; it reads MTKFVRKYMFCLVLVFAACSLVVNS. Cystine bridges form between Cys76–Cys107, Cys80–Cys86, Cys83–Cys109, and Cys95–Cys101.

Belongs to the plant cysteine rich small secretory peptide family. Epidermal patterning factor subfamily. Interacts with ERECTA, ERL1 and TMM. Expressed in leaves, especially by the MMCs and their early descendants cells (stomatal lineage cells) including guard mother cells (GMCs).

Its subcellular location is the secreted. Its function is as follows. Controls stomatal patterning. Regulates the number of cells that enter, and remain in, the stomatal lineage by inhibiting protodermal cells from adopting the meristemoid mother cell (MMC) fate in a non-cell-autonomous manner. Mediates stomatal development inhibition. MEPF2: mobile signal controlling stomatal development in a non-cell-autonomous manner. Uses ERECTA as major receptor. Inactivated by cleavage by CRSP (AC Q9LNU1). May act by competing with somatogen (AC Q9SV72) for the same receptor, TMM (AC Q9SSD1). The polypeptide is Protein EPIDERMAL PATTERNING FACTOR 2 (Arabidopsis thaliana (Mouse-ear cress)).